Reading from the N-terminus, the 168-residue chain is Transcription elongation factor GreB (168 aa).

Belongs to the GreA/GreB family. GreB subfamily.

In terms of biological role, necessary for efficient RNA polymerase transcription elongation past template-encoded arresting sites. The arresting sites in DNA have the property of trapping a certain fraction of elongating RNA polymerases that pass through, resulting in locked ternary complexes. Cleavage of the nascent transcript by cleavage factors such as GreA or GreB allows the resumption of elongation from the new 3'terminus. GreB releases sequences of up to 9 nucleotides in length. The protein is Transcription elongation factor GreB of Xanthomonas axonopodis pv. citri (strain 306).